Consider the following 383-residue polypeptide: N-acetyldiaminopimelate deacetylase (383 aa).

Asp-72 is a catalytic residue. Residue Glu-131 is the Proton acceptor of the active site.

It belongs to the peptidase M20A family. N-acetyldiaminopimelate deacetylase subfamily.

It carries out the reaction N-acetyl-(2S,6S)-2,6-diaminopimelate + H2O = (2S,6S)-2,6-diaminopimelate + acetate. It functions in the pathway amino-acid biosynthesis; L-lysine biosynthesis via DAP pathway; LL-2,6-diaminopimelate from (S)-tetrahydrodipicolinate (acetylase route): step 3/3. Functionally, catalyzes the conversion of N-acetyl-diaminopimelate to diaminopimelate and acetate. The sequence is that of N-acetyldiaminopimelate deacetylase from Lacticaseibacillus casei (strain BL23) (Lactobacillus casei).